The primary structure comprises 216 residues: Adenylate kinase (216 aa).

10 to 15 is a binding site for ATP; it reads GAGKGT. The segment at 30 to 59 is NMP; sequence STGDMFRAAIKEGTPLGLQAKEYMDRGDLV. AMP-binding positions include T31, R36, 57-59, 85-88, and Q92; these read DLV and GFPR. The tract at residues 126-163 is LID; the sequence is GRRICKNCGATYHLVFNPPAKSGVCDKCGGELYQRADD. Position 127 (R127) interacts with ATP. The Zn(2+) site is built by C130 and C133. Residue 136 to 137 participates in ATP binding; the sequence is TY. Zn(2+) is bound by residues C150 and C153. AMP-binding residues include R160 and R171. Q199 is an ATP binding site.

Belongs to the adenylate kinase family. In terms of assembly, monomer.

Its subcellular location is the cytoplasm. The enzyme catalyses AMP + ATP = 2 ADP. It participates in purine metabolism; AMP biosynthesis via salvage pathway; AMP from ADP: step 1/1. Catalyzes the reversible transfer of the terminal phosphate group between ATP and AMP. Plays an important role in cellular energy homeostasis and in adenine nucleotide metabolism. The chain is Adenylate kinase from Geobacillus sp. (strain WCH70).